We begin with the raw amino-acid sequence, 129 residues long: MSTQPSKDLETFPNPRPERDFVLHMRIPEFTCLCPKTGQPDFATIHLDYVPDERCVELKSLKLYMWSFRDQGAFHEAITNEILDDLVRATEPRYMKVTAEFYVRGGIYTTVVAEHRKPGWAPAPKVELA.

C34 (thioimide intermediate) is an active-site residue. D41 (proton donor) is an active-site residue. Substrate-binding positions include 56 to 58 and 75 to 76; these read VEL and HE.

Belongs to the GTP cyclohydrolase I family. QueF type 1 subfamily.

It localises to the cytoplasm. The enzyme catalyses 7-aminomethyl-7-carbaguanine + 2 NADP(+) = 7-cyano-7-deazaguanine + 2 NADPH + 3 H(+). It functions in the pathway tRNA modification; tRNA-queuosine biosynthesis. Functionally, catalyzes the NADPH-dependent reduction of 7-cyano-7-deazaguanine (preQ0) to 7-aminomethyl-7-deazaguanine (preQ1). In Alkalilimnicola ehrlichii (strain ATCC BAA-1101 / DSM 17681 / MLHE-1), this protein is NADPH-dependent 7-cyano-7-deazaguanine reductase.